Here is a 129-residue protein sequence, read N- to C-terminus: Small ribosomal subunit protein uS11 (129 aa).

Belongs to the universal ribosomal protein uS11 family. As to quaternary structure, part of the 30S ribosomal subunit. Interacts with proteins S7 and S18. Binds to IF-3.

Functionally, located on the platform of the 30S subunit, it bridges several disparate RNA helices of the 16S rRNA. Forms part of the Shine-Dalgarno cleft in the 70S ribosome. The polypeptide is Small ribosomal subunit protein uS11 (Pseudomonas fluorescens (strain ATCC BAA-477 / NRRL B-23932 / Pf-5)).